We begin with the raw amino-acid sequence, 144 residues long: MTHRRATLCAMASVALVSAAQLGMRWSMSRLPSPVQWLEMQEHAQLDLSALRVVCASITAYALSMLFWLLALRVLPLSRAYSLLSISYALVYTLAATLPFFHETFTVSKTVGVSLIVAGVLTINLRRLPRPSPQDLSHENQRFR.

Residues 1–6 are Cytoplasmic-facing; the sequence is MTHRRA. Residues 7-24 form a helical membrane-spanning segment; the sequence is TLCAMASVALVSAAQLGM. Residues 25–56 lie on the Periplasmic side of the membrane; it reads RWSMSRLPSPVQWLEMQEHAQLDLSALRVVCA. Residues 57-77 traverse the membrane as a helical segment; it reads SITAYALSMLFWLLALRVLPL. Residues 78 to 80 are Cytoplasmic-facing; it reads SRA. A helical membrane pass occupies residues 81-101; it reads YSLLSISYALVYTLAATLPFF. Residues 102 to 104 are Periplasmic-facing; the sequence is HET. The chain crosses the membrane as a helical span at residues 105–125; sequence FTVSKTVGVSLIVAGVLTINL. Topologically, residues 126-144 are cytoplasmic; sequence RRLPRPSPQDLSHENQRFR.

The protein belongs to the ArnF family. Heterodimer of ArnE and ArnF.

Its subcellular location is the cell inner membrane. Its pathway is bacterial outer membrane biogenesis; lipopolysaccharide biosynthesis. Functionally, translocates 4-amino-4-deoxy-L-arabinose-phosphoundecaprenol (alpha-L-Ara4N-phosphoundecaprenol) from the cytoplasmic to the periplasmic side of the inner membrane. This chain is Probable 4-amino-4-deoxy-L-arabinose-phosphoundecaprenol flippase subunit ArnF, found in Pseudomonas syringae pv. syringae (strain B728a).